Consider the following 358-residue polypeptide: ATP-dependent (S)-NAD(P)H-hydrate dehydratase (358 aa).

A YjeF C-terminal domain is found at 63–354; the sequence is LLQSAKNVIP…QQIHQAFEEL (292 aa). Residues G163 and 220 to 226 contribute to the (6S)-NADPHX site; that span reads NVVEFDR. ATP contacts are provided by residues 261 to 265 and 280 to 289; these read KGQHD and GSNRRCGGQG. Residue D290 participates in (6S)-NADPHX binding.

It belongs to the NnrD/CARKD family. The cofactor is Mg(2+).

The catalysed reaction is (6S)-NADHX + ATP = ADP + phosphate + NADH + H(+). The enzyme catalyses (6S)-NADPHX + ATP = ADP + phosphate + NADPH + H(+). In terms of biological role, catalyzes the dehydration of the S-form of NAD(P)HX at the expense of ATP, which is converted to ADP. Together with NAD(P)HX epimerase, which catalyzes the epimerization of the S- and R-forms, the enzyme allows the repair of both epimers of NAD(P)HX, a damaged form of NAD(P)H that is a result of enzymatic or heat-dependent hydration. The sequence is that of ATP-dependent (S)-NAD(P)H-hydrate dehydratase from Nematostella vectensis (Starlet sea anemone).